Reading from the N-terminus, the 216-residue chain is Type-4 uracil-DNA glycosylase (216 aa).

2 residues coordinate [4Fe-4S] cluster: Cys14 and Cys17. Residues 41 to 43, Phe55, and Asn82 contribute to the uracil site; that span reads GEA. The [4Fe-4S] cluster site is built by Cys86 and Cys102. His164 contributes to the uracil binding site.

This sequence belongs to the uracil-DNA glycosylase (UDG) superfamily. Type 4 (UDGa) family. In terms of assembly, interacts with the sliding clamp PCNA3 subunit.

The catalysed reaction is Hydrolyzes single-stranded DNA or mismatched double-stranded DNA and polynucleotides, releasing free uracil.. Its function is as follows. Removes uracil bases that are present in DNA as a result of either deamination of cytosine or misincorporation of dUMP instead of dTMP. Can remove uracil from double-stranded DNA containing either a U/G or U/A base pair as well as from single-stranded DNA. The sequence is that of Type-4 uracil-DNA glycosylase from Saccharolobus solfataricus (strain ATCC 35092 / DSM 1617 / JCM 11322 / P2) (Sulfolobus solfataricus).